We begin with the raw amino-acid sequence, 159 residues long: Regulatory protein RecX (159 aa).

This sequence belongs to the RecX family.

Its subcellular location is the cytoplasm. Modulates RecA activity. This Chlorobium limicola (strain DSM 245 / NBRC 103803 / 6330) protein is Regulatory protein RecX.